A 694-amino-acid chain; its full sequence is Cyclic nucleotide-gated channel beta-3 (694 aa).

Residues M1–Y210 lie on the Cytoplasmic side of the membrane. Disordered regions lie at residues C24–C82 and E146–Q177. Composition is skewed to polar residues over residues N26–N40 and A153–E168. Residues L211–F234 form a helical membrane-spanning segment. Topologically, residues P235–N241 are extracellular. The helical transmembrane segment at K242 to L262 threads the bilayer. Topologically, residues I263–K291 are cytoplasmic. A helical transmembrane segment spans residues F292 to F309. Over G310–N312 the chain is Extracellular. Residues P313–F327 traverse the membrane as a helical segment. Residues E328–A340 lie on the Cytoplasmic side of the membrane. The interval A340–A439 is ion conduction pathway. A helical transmembrane segment spans residues Y341–Y363. Residues Y364 to K385 are Extracellular-facing. The next 2 membrane-spanning stretches (helical) occupy residues Y386–I412 and V413–I437. The interval T399–G402 is selectivity filter. Residues G438–K694 lie on the Cytoplasmic side of the membrane. The interval A442–K518 is C-linker. The tract at residues T522–L638 is cyclic nucleotide-binding domain. 3',5'-cyclic GMP is bound by residues G583, E584, R596, and T597.

Belongs to the cyclic nucleotide-gated cation channel (TC 1.A.1.5) family. CNGB3 subfamily. In terms of assembly, forms heterotetrameric channels composed of CNGA3 and CNGB3 subunits with 3:1 stoichiometry. As to expression, small subset of retinal photoreceptor cells and testis.

The protein resides in the cell membrane. The catalysed reaction is Ca(2+)(in) = Ca(2+)(out). It carries out the reaction Na(+)(in) = Na(+)(out). The enzyme catalyses K(+)(in) = K(+)(out). It catalyses the reaction NH4(+)(in) = NH4(+)(out). The catalysed reaction is Rb(+)(in) = Rb(+)(out). It carries out the reaction Li(+)(in) = Li(+)(out). The enzyme catalyses Cs(+)(in) = Cs(+)(out). In terms of biological role, pore-forming subunit of the cone cyclic nucleotide-gated channel. Mediates cone photoresponses at bright light converting transient changes in intracellular cGMP levels into electrical signals. In the dark, cGMP levels are high and keep the channel open enabling a steady inward current carried by Na(+) and Ca(2+) ions that leads to membrane depolarization and neurotransmitter release from synaptic terminals. Upon photon absorption cGMP levels decline leading to channel closure and membrane hyperpolarization that ultimately slows neurotransmitter release and signals the presence of light, the end point of the phototransduction cascade. Conducts cGMP- and cAMP-gated ion currents, with permeability for monovalent and divalent cations. This Mus musculus (Mouse) protein is Cyclic nucleotide-gated channel beta-3.